The chain runs to 282 residues: Complement component 1 Q subcomponent-binding protein, mitochondrial (282 aa).

The N-terminal 73 residues, 1 to 73, are a transit peptide targeting the mitochondrion; that stretch reads MLPLLRCVPR…PCACGCGCGS (73 aa). A C1q binding region spans residues 76 to 93; sequence TDGDKAFVDFLSDEIKEE. S87 bears the Phosphoserine mark. N6-acetyllysine is present on K91. A disordered region spans residues 138–164; it reads SIPPTFDGEEEPSQGQKVEEQEPELTS. Positions 168–213 are interaction with MAVS; sequence FVVEVIKNDDGKKALVLDCHYPEDEVGQEDEAESDIFSIREVSFQS. Y188 bears the Phosphotyrosine mark. Phosphoserine is present on residues S201 and S205. T214 carries the post-translational modification Phosphothreonine.

The protein belongs to the MAM33 family. As to quaternary structure, homotrimer; three monomers form a donut-shaped structure with an unusually asymmetric charge distribution on the surface. Interacts with CDK13, HRK, VTN, NFYB, ADRA1B, FOXC1, DDX21, DDX50, NCL, SRSF1, SRSF9 and CDKN2A isoform smARF. Interacts with CD93; the association may represent a cell surface C1q receptor. Interacts with KRT1; the association represents a cell surface kininogen receptor. Interacts with CD209; the interaction is indicative for a C1q:C1QBP:CD209 signaling complex. Interacts with FBL and RRP1; the respective interactions with C1QBP are competitive. Probably associates with the mitoribosome. Interacts with MAVS; the interaction occurs upon viral transfection. Interacts with PPIF. Interacts with U2AF1L4. Interacts with PLEKHN1. Interacts with VGF-derived peptide TLQP-21. Interacts with POLGARF which is produced from an alternative reading frame of the POLG gene; the interaction results in nucleolar localization of C1QBP, probably due to prevention of C1QBP maturation and redirection from mitochondria to nucleoli. Interacts with MRE11 and RAD50; forming the MRC (MRE11-RAD50-C1QBP) complex that inhibits the activity of MRE11. (Microbial infection) Interacts with Rubella virus capsid protein; the interaction occurs in mitochondria. Interacts with Rubella virus protease/methyltransferase p150. In terms of assembly, (Microbial infection) Interacts with Staphylococcus aureus protein A/spa. As to quaternary structure, (Microbial infection) Interacts with Staphylococcus aureus protein A/spa, HIV-1 Tat and HCV core protein. (Microbial infection) Interacts with HIV-1 Tat and HCV core protein. In terms of assembly, (Microbial infection) Interacts with L.monocytogenes internalin B. As to quaternary structure, (Microbial infection) Interacts with Epstein-Barr virus EBNA1. Expressed on cell surface of peripheral blood cells (at protein level); Surface expression is reported for macrophages and monocyte-derived dendritic cells.

The protein localises to the mitochondrion matrix. The protein resides in the nucleus. It is found in the nucleolus. It localises to the cell membrane. Its subcellular location is the secreted. The protein localises to the cytoplasm. Functionally, multifunctional and multicompartmental protein involved in inflammation and infection processes, ribosome biogenesis, protein synthesis in mitochondria, regulation of apoptosis, transcriptional regulation and pre-mRNA splicing. At the cell surface is thought to act as an endothelial receptor for plasma proteins of the complement and kallikrein-kinin cascades. Putative receptor for C1q; specifically binds to the globular 'heads' of C1q thus inhibiting C1; may perform the receptor function through a complex with C1qR/CD93. In complex with cytokeratin-1/KRT1 is a high affinity receptor for kininogen-1/HMWK. Can also bind other plasma proteins, such as coagulation factor XII leading to its autoactivation. May function to bind initially fluid kininogen-1 to the cell membrane. The secreted form may enhance both extrinsic and intrinsic coagulation pathways. It is postulated that the cell surface form requires docking with transmembrane proteins for downstream signaling which might be specific for a cell-type or response. By acting as C1q receptor is involved in chemotaxis of immature dendritic cells and neutrophils and is proposed to signal through CD209/DC-SIGN on immature dendritic cells, through integrin alpha-4/beta-1 during trophoblast invasion of the decidua, and through integrin beta-1 during endothelial cell adhesion and spreading. Signaling involved in inhibition of innate immune response is implicating the PI3K-AKT/PKB pathway. Required for protein synthesis in mitochondria. In mitochondrial translation may be involved in formation of functional 55S mitoribosomes; the function seems to involve its RNA-binding activity. Acts as a RNA modification reader, which specifically recognizes and binds mitochondrial RNAs modified by C5-methylcytosine (m5C) in response to stress, and promotes recruitment of the mitochondrial degradosome complex, leading to their degradation. May be involved in the nucleolar ribosome maturation process; the function may involve the exchange of FBL for RRP1 in the association with pre-ribosome particles. Involved in regulation of RNA splicing by inhibiting the RNA-binding capacity of SRSF1 and its phosphorylation. Is required for the nuclear translocation of splicing factor U2AF1L4. Involved in regulation of CDKN2A- and HRK-mediated apoptosis. Stabilizes mitochondrial CDKN2A isoform smARF. May be involved in regulation of FOXC1 transcriptional activity and NFY/CCAAT-binding factor complex-mediated transcription. May play a role in antibacterial defense as it can bind to cell surface hyaluronan and inhibit Streptococcus pneumoniae hyaluronate lyase. May be involved in modulation of the immune response; ligation by HCV core protein is resulting in suppression of interleukin-12 production in monocyte-derived dendritic cells. Involved in regulation of antiviral response by inhibiting RIGI- and IFIH1-mediated signaling pathways probably involving its association with MAVS after viral infection. Acts as a regulator of DNA repair via homologous recombination by inhibiting the activity of MRE11: interacts with unphosphorylated MRE11 and RAD50 in absence of DNA damage, preventing formation and activity of the MRN complex. Following DNA damage, dissociates from phosphorylated MRE11, allowing formation of the MRN complex. Its function is as follows. (Microbial infection) Involved in HIV-1 replication, presumably by contributing to splicing of viral RNA. In terms of biological role, (Microbial infection) In infection processes acts as an attachment site for microbial proteins, including Listeria monocytogenes internalin B (InlB) and Staphylococcus aureus protein A. (Microbial infection) Involved in replication of Rubella virus. This is Complement component 1 Q subcomponent-binding protein, mitochondrial (C1QBP) from Homo sapiens (Human).